The primary structure comprises 264 residues: 4-hydroxy-tetrahydrodipicolinate reductase (264 aa).

8-13 (GPRGNM) provides a ligand contact to NAD(+). Lys36 is an NADP(+) binding site. NAD(+) is bound by residues 97–99 (GTT) and 123–126 (APNF). The active-site Proton donor/acceptor is the His153. His154 serves as a coordination point for (S)-2,3,4,5-tetrahydrodipicolinate. The active-site Proton donor is the Lys157. (S)-2,3,4,5-tetrahydrodipicolinate is bound at residue 163–164 (GT).

This sequence belongs to the DapB family.

Its subcellular location is the cytoplasm. The catalysed reaction is (S)-2,3,4,5-tetrahydrodipicolinate + NAD(+) + H2O = (2S,4S)-4-hydroxy-2,3,4,5-tetrahydrodipicolinate + NADH + H(+). The enzyme catalyses (S)-2,3,4,5-tetrahydrodipicolinate + NADP(+) + H2O = (2S,4S)-4-hydroxy-2,3,4,5-tetrahydrodipicolinate + NADPH + H(+). It functions in the pathway amino-acid biosynthesis; L-lysine biosynthesis via DAP pathway; (S)-tetrahydrodipicolinate from L-aspartate: step 4/4. Catalyzes the conversion of 4-hydroxy-tetrahydrodipicolinate (HTPA) to tetrahydrodipicolinate. The protein is 4-hydroxy-tetrahydrodipicolinate reductase of Shouchella clausii (strain KSM-K16) (Alkalihalobacillus clausii).